The sequence spans 62 residues: Fungus-induced protein 1 (62 aa).

A signal peptide spans M1–G22.

In Caenorhabditis briggsae, this protein is Fungus-induced protein 1.